The following is a 600-amino-acid chain: Albumin (600 aa).

Residues 1-10 (LLFLFSSAYS) form the signal peptide. Positions 11-16 (RGVFRR) are excised as a propeptide. 3 consecutive Albumin domains span residues 11 to 202 (RGVF…DELR), 203 to 395 (DEGK…EFQP), and 396 to 593 (LVEE…KFVA). A Cu cation-binding site is contributed by H19. S21 carries the phosphoserine modification. Residues E22 and D29 each coordinate Ca(2+). A disulfide bond links C69 and C78. Phosphoserine occurs at positions 74 and 81. H83 provides a ligand contact to Zn(2+). Cystine bridges form between C91-C107, C106-C117, C140-C185, C184-C193, C216-C262, and C261-C269. T99 carries the post-translational modification Phosphothreonine. K221 bears the N6-succinyllysine mark. K256 contacts (4Z,15Z)-bilirubin IXalpha. E260 lines the Ca(2+) pocket. Zn(2+)-binding residues include H263 and D265. 4 residues coordinate Ca(2+): D265, E268, D271, and D275. 8 disulfides stabilise this stretch: C281/C295, C294/C305, C332/C377, C376/C385, C408/C454, C453/C464, C477/C493, and C492/C503. Phosphoserine is present on S289. Position 435 is a phosphoserine (S435). 2 positions are modified to phosphothreonine: T436 and T438. An N6-succinyllysine modification is found at K452. S505 is modified (phosphoserine). 2 disulfide bridges follow: C530-C575 and C574-C583. K535 is modified (N6-succinyllysine). K550 is subject to N6-methyllysine. K580 carries the N6-succinyllysine modification.

The protein belongs to the ALB/AFP/VDB family. In terms of assembly, interacts with FCGRT; this interaction regulates ALB homeostasis. Interacts with TASOR. In plasma, occurs in a covalently-linked complex with chromophore-bound alpha-1-microglobulin; this interaction does not prevent fatty acid binding to ALB. In terms of processing, phosphorylated by FAM20C in the extracellular medium. As to expression, plasma.

The protein localises to the secreted. Binds water, Ca(2+), Na(+), K(+), fatty acids, hormones, bilirubin and drugs. Its main function is the regulation of the colloidal osmotic pressure of blood. Major zinc transporter in plasma, typically binds about 80% of all plasma zinc. Major calcium and magnesium transporter in plasma, binds approximately 45% of circulating calcium and magnesium in plasma. Potentially has more than two calcium-binding sites and might additionally bind calcium in a non-specific manner. The shared binding site between zinc and calcium at residue Asp-265 suggests a crosstalk between zinc and calcium transport in the blood. The rank order of affinity is zinc &gt; calcium &gt; magnesium. Binds to the bacterial siderophore enterobactin and inhibits enterobactin-mediated iron uptake of E.coli from ferric transferrin, and may thereby limit the utilization of iron and growth of enteric bacteria such as E.coli. Does not prevent iron uptake by the bacterial siderophore aerobactin. In Macaca mulatta (Rhesus macaque), this protein is Albumin (ALB).